A 244-amino-acid polypeptide reads, in one-letter code: Ras-like protein family member 11B (244 aa).

The interval 19-242 is small GTPase-like; that stretch reads PSSRVIKIAV…VLSAKVRTVT (224 aa). Residues 30–37, 77–81, and 142–145 each bind GTP; these read GGSGVGKT, DTPGV, and NKAD. A disordered region spans residues 200-222; it reads INATSSVTEKKRSPLIPRPKSPN.

This sequence belongs to the small GTPase superfamily. Ras family.

The enzyme catalyses GTP + H2O = GDP + phosphate + H(+). The protein is Ras-like protein family member 11B of Danio rerio (Zebrafish).